Consider the following 129-residue polypeptide: UPF0102 protein Ctha_1382 (129 aa).

The protein belongs to the UPF0102 family.

This chain is UPF0102 protein Ctha_1382, found in Chloroherpeton thalassium (strain ATCC 35110 / GB-78).